The chain runs to 211 residues: uncharacterized protein (211 aa).

Disordered regions lie at residues 45–74 (RSCGRSSTGGCSPCSGPGPSSPRTSRGALS) and 147–211 (AETR…WEEP). The span at 48–71 (GRSSTGGCSPCSGPGPSSPRTSRG) shows a compositional bias: low complexity. Residues 195 to 205 (DSGSIKMSENE) show a composition bias toward polar residues.

This is an uncharacterized protein from Homo sapiens (Human).